The sequence spans 239 residues: Putative ankyrin repeat protein RBE_0489 (239 aa).

3 ANK repeats span residues 23-52 (ISSRNLFKAVEKNNIAGTKFLLEHGISPNA), 80-109 (GIDTPLHIAANNGYTTVVKILLENGAFINA), and 113-143 (FGFTPLHSAIISSYKLSSIKLLLEYGTSLTL).

The sequence is that of Putative ankyrin repeat protein RBE_0489 from Rickettsia bellii (strain RML369-C).